We begin with the raw amino-acid sequence, 232 residues long: 5'-methylthioadenosine/S-adenosylhomocysteine nucleosidase (232 aa).

E14 functions as the Proton acceptor in the catalytic mechanism. Residues G80, V154, and 175-176 (ME) contribute to the substrate site. D199 (proton donor) is an active-site residue.

It belongs to the PNP/UDP phosphorylase family. MtnN subfamily.

The catalysed reaction is S-adenosyl-L-homocysteine + H2O = S-(5-deoxy-D-ribos-5-yl)-L-homocysteine + adenine. It carries out the reaction S-methyl-5'-thioadenosine + H2O = 5-(methylsulfanyl)-D-ribose + adenine. It catalyses the reaction 5'-deoxyadenosine + H2O = 5-deoxy-D-ribose + adenine. It functions in the pathway amino-acid biosynthesis; L-methionine biosynthesis via salvage pathway; S-methyl-5-thio-alpha-D-ribose 1-phosphate from S-methyl-5'-thioadenosine (hydrolase route): step 1/2. Functionally, catalyzes the irreversible cleavage of the glycosidic bond in both 5'-methylthioadenosine (MTA) and S-adenosylhomocysteine (SAH/AdoHcy) to adenine and the corresponding thioribose, 5'-methylthioribose and S-ribosylhomocysteine, respectively. Also cleaves 5'-deoxyadenosine, a toxic by-product of radical S-adenosylmethionine (SAM) enzymes, into 5-deoxyribose and adenine. This chain is 5'-methylthioadenosine/S-adenosylhomocysteine nucleosidase, found in Actinobacillus pleuropneumoniae serotype 3 (strain JL03).